The sequence spans 315 residues: Ribonuclease Z (315 aa).

Positions 62, 64, 66, 67, 144, 215, and 273 each coordinate Zn(2+). The Proton acceptor role is filled by aspartate 66.

The protein belongs to the RNase Z family. In terms of assembly, homodimer. Requires Zn(2+) as cofactor.

It carries out the reaction Endonucleolytic cleavage of RNA, removing extra 3' nucleotides from tRNA precursor, generating 3' termini of tRNAs. A 3'-hydroxy group is left at the tRNA terminus and a 5'-phosphoryl group is left at the trailer molecule.. Its function is as follows. Zinc phosphodiesterase, which displays some tRNA 3'-processing endonuclease activity. Probably involved in tRNA maturation, by removing a 3'-trailer from precursor tRNA. In Synechococcus sp. (strain CC9311), this protein is Ribonuclease Z.